The chain runs to 257 residues: Gamma-secretase subunit APH-1B (257 aa).

7 helical membrane-spanning segments follow: residues 5-25, 32-52, 71-91, 115-135, 158-178, 186-206, and 213-233; these read VFFGCAFIAFGPALALYVFTI, IIFLIAGAFFWLVSLLISSLV, LLIFGAFVSVYIQEMFRFAYY, LLAYVSGLGFGIMSGVFSFVN, YSAFMTLVIILLHVFWGIVFF, WGILLIVLLTHLLVSAQTFIS, and LASAFIILVLMGTWAFLAAGG.

This sequence belongs to the APH-1 family. In terms of assembly, probable component of the gamma-secretase complex, a complex composed of a presenilin homodimer (PSEN1 or PSEN2), nicastrin (NCSTN), APH1 (APH1A or APH1B) and PEN2. Such minimal complex is sufficient for secretase activity, although other components may exist. Interacts with PSEN1 and PSEN2. Weakly or not expressed in leukocytes, lung, placenta, small intestine, liver, kidney, spleen thymus, colon, skeletal muscle, heart and brain.

It is found in the membrane. Its function is as follows. Probable subunit of the gamma-secretase complex, an endoprotease complex that catalyzes the intramembrane cleavage of integral proteins such as Notch receptors and APP (amyloid-beta precursor protein). It probably represents a stabilizing cofactor for the presenilin homodimer that promotes the formation of a stable complex. Probably present in a minority of gamma-secretase complexes compared to APH1A. The polypeptide is Gamma-secretase subunit APH-1B (APH1B) (Homo sapiens (Human)).